A 33-amino-acid chain; its full sequence is Antimicrobial peptide MBP-1 (33 aa).

Predominantly in the embryo portion of the kernel.

Its subcellular location is the secreted. Its function is as follows. Inhibitor of both bacterial and fungal growth in vitro. The polypeptide is Antimicrobial peptide MBP-1 (Zea mays (Maize)).